The following is a 275-amino-acid chain: Echotoxin-2 (275 aa).

The first 23 residues, 1-23 (MKRNILALVVVVALISQSRPAES), serve as a signal peptide directing secretion. The tract at residues 23–32 (SAGGTIIATL) is plays an important role in the hemolytic activity. The segment at 49-67 (ETGASVASAAAAATSSDYS) is N-terminal region. Glycine 123, serine 141, proline 143, tyrosine 176, and tyrosine 177 together coordinate phosphocholine. The segment at 141–156 (SAPYNFDFYSNWLAVG) is trp-rich region, which is important for the binding to lipid membrane. Residues 249-275 (RAIQQELARRAEEEKQRKRKALDEMLK) constitute a propeptide that is removed on maturation.

It belongs to the actinoporin family. Sea anemone subfamily. As to quaternary structure, octamer or nonamer in membranes. Monomer in the soluble state. In terms of tissue distribution, salivary gland.

The protein resides in the secreted. It is found in the nematocyst. The protein localises to the target cell membrane. Pore-forming protein that forms cations-selective hydrophilic pores of around 1 nm and causes cardiac stimulation and cytolysis. Pore formation is a multi-step process that involves specific recognition of membrane sphingomyelin (but neither cholesterol nor phosphatidylcholine) using aromatic rich region and adjacent phosphocholine (POC) binding site, firm binding to the membrane (mainly driven by hydrophobic interactions) accompanied by the transfer of the N-terminal region to the lipid-water interface and finally pore formation after oligomerization of monomers. Exhibits both hemolytic and lethal activities. Gangliosides potently inhibits the hemolytic activity. The sequence is that of Echotoxin-2 from Monoplex parthenopeus (Giant triton).